The chain runs to 200 residues: Ribonuclease HII (200 aa).

Residues 14-200 (ERVAGLDEAG…HRQSFTLFRD (187 aa)) enclose the RNase H type-2 domain. Asp-20, Glu-21, and Asp-112 together coordinate a divalent metal cation.

This sequence belongs to the RNase HII family. It depends on Mn(2+) as a cofactor. Mg(2+) serves as cofactor.

Its subcellular location is the cytoplasm. The enzyme catalyses Endonucleolytic cleavage to 5'-phosphomonoester.. Functionally, endonuclease that specifically degrades the RNA of RNA-DNA hybrids. This Salinibacter ruber (strain DSM 13855 / M31) protein is Ribonuclease HII.